The primary structure comprises 230 residues: Thymidylate kinase (230 aa).

20 to 27 contacts ATP; it reads GGEGAGKS.

It belongs to the thymidylate kinase family.

The catalysed reaction is dTMP + ATP = dTDP + ADP. Its function is as follows. Phosphorylation of dTMP to form dTDP in both de novo and salvage pathways of dTTP synthesis. The protein is Thymidylate kinase of Rhodopseudomonas palustris (strain BisB18).